The following is a 561-amino-acid chain: Shugoshin 1 (561 aa).

Residues 1–176 form a necessary for interaction with PPP2CA and PPP2R1A region; the sequence is MAKERCLKKS…DTLGVDFDSG (176 aa). A coiled-coil region spans residues 7–89; it reads LKKSFQDSLE…DIILQLRKEC (83 aa). Ser14 is modified (phosphoserine; by NEK2). A D-box 1 motif is present at residues 192–200; it reads RSSLKKHCN. Ser256 carries the phosphoserine modification. Disordered stretches follow at residues 260–331 and 348–441; these read IQPG…SVSS and FRQK…HLSL. The span at 267–296 shows a compositional bias: basic and acidic residues; it reads KTKEDILESKSEQTKSKQRDTQERKREEKR. The stretch at 273–313 forms a coiled coil; the sequence is LESKSEQTKSKQRDTQERKREEKRKANRRKSKRMSKYKENK. Residues 297–307 show a composition bias toward basic residues; that stretch reads KANRRKSKRMS. Residues 308–318 show a composition bias toward basic and acidic residues; that stretch reads KYKENKSENKK. The KEN box signature appears at 310-312; the sequence is KEN. Low complexity predominate over residues 364–375; that stretch reads SEVSLCESSGSG. Polar residues predominate over residues 388 to 398; sequence YIQNPTSNSDR. A compositionally biased stretch (basic and acidic residues) spans 410–421; it reads KYTDEKETEGSK. Residues 422–433 show a composition bias toward low complexity; the sequence is PTKTPTTTPPET. Ser436 is modified (phosphoserine). Residues 438-446 carry the D-box 2 motif; that stretch reads HLSLKDITN. The PXVXL/I motif motif lies at 451-455; it reads PVVKI. A D-box 3 motif is present at residues 457–465; it reads RLSLSPKKN. At Ser507 the chain carries Phosphoserine; by NEK2.

Belongs to the shugoshin family. In terms of assembly, interacts with PPP2CA (or PPP2CB), PPP2R1B, PPP2R5A, PPP2R5B, PPP2R5C, PPP2R5D, PPP2R5E, SET, LRRC59, RBM10 (or RBM5), RPL10A, RPL28, RPL7, RPL7A and RPLP1. Interaction with protein phosphatase 2A occurs most probably through direct binding to the regulatory B56 subunits: PPP2R1B, PPP2R5A, PPP2R5B, PPP2R5C, PPP2R5D, PPP2R5E. Interacts with PPP2R1A and NEK2. Isoform 3 interacts with PLK1. Interacts with CDCA8. In terms of processing, ubiquitinated and degraded during mitotic exit by APC/C-Cdh1. Phosphorylation by NEK2 is essential for chromosome congression in mitosis and for the proper attachment of spindle microtubule to the kinetochore. Phosphorylated by PLK1 and AUKRB. In terms of tissue distribution, widely expressed. Highly expressed in testis. Expressed in lung, small intestine, breast, liver and placenta. Strongly overexpressed in 90% of breast cancers tested.

It is found in the nucleus. It localises to the chromosome. The protein resides in the centromere. The protein localises to the kinetochore. Its subcellular location is the cytoplasm. It is found in the cytoskeleton. It localises to the spindle pole. The protein resides in the microtubule organizing center. The protein localises to the centrosome. Its subcellular location is the nucleus speckle. Plays a central role in chromosome cohesion during mitosis by preventing premature dissociation of cohesin complex from centromeres after prophase, when most of cohesin complex dissociates from chromosomes arms. May act by preventing phosphorylation of the STAG2 subunit of cohesin complex at the centromere, ensuring cohesin persistence at centromere until cohesin cleavage by ESPL1/separase at anaphase. Essential for proper chromosome segregation during mitosis and this function requires interaction with PPP2R1A. Its phosphorylated form is necessary for chromosome congression and for the proper attachment of spindle microtubule to the kinetochore. Necessary for kinetochore localization of PLK1 and CENPF. May play a role in the tension sensing mechanism of the spindle-assembly checkpoint by regulating PLK1 kinetochore affinity. Isoform 3 plays a role in maintaining centriole cohesion involved in controlling spindle pole integrity. Involved in centromeric enrichment of AUKRB in prometaphase. In Homo sapiens (Human), this protein is Shugoshin 1.